A 164-amino-acid polypeptide reads, in one-letter code: UPF0114 protein YqhA (164 aa).

Transmembrane regions (helical) follow at residues 10 to 32, 53 to 75, and 136 to 155; these read YASRWLLAPVYFGLSLALIALAL, LILVLLSLVDMTLVGGLLVMVMF, and LMWYVIIHLTFVLSAFVMGY.

Belongs to the UPF0114 family.

It localises to the cell membrane. The polypeptide is UPF0114 protein YqhA (Salmonella typhi).